Here is a 108-residue protein sequence, read N- to C-terminus: uncharacterized protein (108 aa).

Gly2 carries the N-myristoyl glycine; by host lipid modification.

This is an uncharacterized protein from Acanthamoeba polyphaga (Amoeba).